The sequence spans 219 residues: Suppressor-of-stellate-like protein (219 aa).

Residues 194-219 (SAESPPIKVESSVSKSPSWLRNVPNF) are disordered. Polar residues predominate over residues 204 to 219 (SSVSKSPSWLRNVPNF).

Belongs to the casein kinase 2 subunit beta family.

This Drosophila melanogaster (Fruit fly) protein is Suppressor-of-stellate-like protein (Ssl).